A 115-amino-acid polypeptide reads, in one-letter code: Large ribosomal subunit protein bL19 (115 aa).

Belongs to the bacterial ribosomal protein bL19 family.

Functionally, this protein is located at the 30S-50S ribosomal subunit interface and may play a role in the structure and function of the aminoacyl-tRNA binding site. This Desulforudis audaxviator (strain MP104C) protein is Large ribosomal subunit protein bL19.